Here is a 320-residue protein sequence, read N- to C-terminus: MQARLLIPILFSVFILSACGTLTGIPSHGGGKRFAVEQELVAASARAAVKDMDLQALHGRKVALYIATMGDQGSGSLTGGRYSIDALIRGEYINSPAVRTDYTYPRYETTAETTSGGLTGLTTSLSTLNAPALSRTQSDGSGSKSSLGLNIGGMGDYRNETLTTNPRDTAFLSHLVQTVFFLRGIDVVSPANADTDVFINIDVFGTIRNRTEMHLYNAETLKAQTKLEYFAVDRTNKKLLIKPKTNAFEAAYKENYALWMGPYKVSKGIKPTEGLMVDFSDIQPYGNHMGNSAPSVEADNSHEGYGYSDEAVRRHRQGQP.

A signal peptide spans 1–18; it reads MQARLLIPILFSVFILSA. A lipid anchor (N-palmitoyl cysteine) is attached at cysteine 19. Cysteine 19 carries S-diacylglycerol cysteine lipidation. A disordered region spans residues 288–320; the sequence is HMGNSAPSVEADNSHEGYGYSDEAVRRHRQGQP.

It belongs to the MafA family.

The protein resides in the cell outer membrane. This is Adhesin MafA 1 (mafA1) from Neisseria meningitidis serogroup A / serotype 4A (strain DSM 15465 / Z2491).